The primary structure comprises 112 residues: Putative acyl carrier protein, mitochondrial (112 aa).

A mitochondrion-targeting transit peptide spans 1 to 28; it reads MLSRFSSQLRFISAVRPVIPKFQPLRFY. The Carrier domain maps to 33–109; sequence PDAEKRILKV…DAISYITKNP (77 aa). O-(pantetheine 4'-phosphoryl)serine is present on Ser-69.

Belongs to the acyl carrier protein (ACP) family. 4'-phosphopantetheine is transferred from CoA to a specific serine of apo-ACP by acpS. This modification is essential for activity because fatty acids are bound in thioester linkage to the sulfhydryl of the prosthetic group.

Its subcellular location is the mitochondrion. It participates in lipid metabolism; fatty acid biosynthesis. In terms of biological role, carrier of the growing fatty acid chain in fatty acid biosynthesis. May be involved in the synthesis of very-long-chain fatty acids. The sequence is that of Putative acyl carrier protein, mitochondrial from Schizosaccharomyces pombe (strain 972 / ATCC 24843) (Fission yeast).